Consider the following 288-residue polypeptide: MSICYYDTVGREKRLLIINQRALALPNRTISSDGTCCDGDEYLLVDTFTKLNFKVQTIRNASKIVLETTVRNYIEKNVKRVACYFVVVLNDGNDADTILTTDGTYSLSELYALFTLYTVRAIPKVFLIQSCLGAKIDRSHCDRASCQCDQEEDAHPTSVCHDIFVNTVRRVIHACSRKSNGSTTTTETKCSDVATVVLTSPHTEETIIVYLRIEAYLRYGDTKCGCFMIEKFCKNLIKYGTRSSVHTTITMVQNEMQITDPKHVPIVQMNCTKLLFLGDENHIIMEEY.

The active site involves Cys-131.

The protein belongs to the peptidase C14A family.

Its function is as follows. May induce host cell apoptosis and contribute of the establishment of a special cell cleavage process in which apoppotic bodies are rescued by the virus and differentiate to form large vesicles in which virion assembles. The sequence is that of Executioner caspase from Spodoptera frugiperda ascovirus 1a (SfAV-1a).